Consider the following 126-residue polypeptide: uncharacterized protein (126 aa).

It belongs to the SufE family.

This is an uncharacterized protein from Haemophilus influenzae (strain ATCC 51907 / DSM 11121 / KW20 / Rd).